A 374-amino-acid polypeptide reads, in one-letter code: DNA replication and repair protein RecF (374 aa).

Position 30 to 37 (30 to 37 (GENAQGKT)) interacts with ATP.

This sequence belongs to the RecF family.

The protein resides in the cytoplasm. Functionally, the RecF protein is involved in DNA metabolism; it is required for DNA replication and normal SOS inducibility. RecF binds preferentially to single-stranded, linear DNA. It also seems to bind ATP. This is DNA replication and repair protein RecF from Pediococcus pentosaceus (strain ATCC 25745 / CCUG 21536 / LMG 10740 / 183-1w).